Here is a 780-residue protein sequence, read N- to C-terminus: Heat shock protein 90-5, chloroplastic (780 aa).

Residues 1 to 60 (MAPALSRSLYTSPLTSVPITPVSSRLSHLRSSFLPHGGALRTGVSCSWNLEKRCNRFAVK) constitute a chloroplast transit peptide. Residues Glu106, Asn110, Asp152, Met157, 172–173 (SG), 196–201 (QFGVGF), Thr251, and Arg441 contribute to the ATP site. Positions 742–780 (GRVEEEEESSTVNEGDDKSGETEVVEPSEVRAESDPWQD) are disordered. Over residues 769–780 (SEVRAESDPWQD) the composition is skewed to basic and acidic residues.

It belongs to the heat shock protein 90 family. Homodimer. Interacts with VIPP1. Interacts with P23-1. In terms of tissue distribution, expressed in roots, cotyledons, young leaves, mature leaves, stems, flowers, petals and siliques.

It localises to the plastid. Its subcellular location is the chloroplast stroma. Functionally, molecular chaperone required for chloroplast biogenesis. Essential for chloroplast biogenesis and maintenance, and thus for embryogenesis. May be involved in the disassembly of VIPP1 for thylakoid membrane formation and/or maintenance. Cooperates with TIC components and other molecular chaperones to drive transport of preproteins into chloroplasts and functions in the chloroplast stroma to facilitate membrane translocation during protein import into the organelle. This chain is Heat shock protein 90-5, chloroplastic, found in Arabidopsis thaliana (Mouse-ear cress).